The chain runs to 480 residues: Endoplasmic reticulum lectin 1 (480 aa).

The first 27 residues, methionine 1 to glycine 27, serve as a signal peptide directing secretion. MRH domains are found at residues serine 108–histidine 245 and serine 339–isoleucine 466. Cysteine 110 and cysteine 123 are joined by a disulfide. The tract at residues valine 152–histidine 172 is disordered. Positions glutamine 163–histidine 172 are enriched in basic and acidic residues. Cystine bridges form between cysteine 198-cysteine 231, cysteine 214-cysteine 243, cysteine 341-cysteine 354, cysteine 418-cysteine 452, and cysteine 433-cysteine 464.

Its subcellular location is the endoplasmic reticulum lumen. Functionally, probable lectin that binds selectively to improperly folded lumenal proteins. May function in endoplasmic reticulum quality control and endoplasmic reticulum-associated degradation (ERAD) of both non-glycosylated proteins and glycoproteins. This Xenopus laevis (African clawed frog) protein is Endoplasmic reticulum lectin 1 (erlec1).